We begin with the raw amino-acid sequence, 366 residues long: Histidinol-phosphate aminotransferase (366 aa).

Lysine 227 is subject to N6-(pyridoxal phosphate)lysine.

The protein belongs to the class-II pyridoxal-phosphate-dependent aminotransferase family. Histidinol-phosphate aminotransferase subfamily. As to quaternary structure, homodimer. The cofactor is pyridoxal 5'-phosphate.

It catalyses the reaction L-histidinol phosphate + 2-oxoglutarate = 3-(imidazol-4-yl)-2-oxopropyl phosphate + L-glutamate. It participates in amino-acid biosynthesis; L-histidine biosynthesis; L-histidine from 5-phospho-alpha-D-ribose 1-diphosphate: step 7/9. The sequence is that of Histidinol-phosphate aminotransferase from Campylobacter hominis (strain ATCC BAA-381 / DSM 21671 / CCUG 45161 / LMG 19568 / NCTC 13146 / CH001A).